A 359-amino-acid polypeptide reads, in one-letter code: MSSILSRYPEAETPVHGYFYSMVELAVVRVFVQHQIFDAIADDGTSIEELATKTGMELNLLERLSNFLVASKVLSSPKPGFIGLPSETKMFQQRRAKLFYSHIFDAFMGSAVKWPQYLQNNGLAEPQKSNRSPFGLGAGYPDKSFYDVLEMMPERAQAFNSTMAIGLGDMPITGIYDFSWVAAHSGTDPERTLIVDVGGGKGQAIKAIVEETPSIPASACVLQDLPNVIKDVPEEEGILNQVQKVGSSFFDKQPTKGALVYYIRRVLNDWPDDECVTILKNIREACASDSRLLISENLLPDEPSVSLAAADLWMMNFAGKRRNVRMFNDLASRSGFEISSIAKDKTSNSAVIEMLPVQI.

S-adenosyl-L-methionine-binding positions include 198–199 (GG), D224, 248–249 (SF), R264, and R265.

This sequence belongs to the class I-like SAM-binding methyltransferase superfamily. Cation-independent O-methyltransferase family.

It participates in mycotoxin biosynthesis. Its function is as follows. Methyltransferase; part of the gene cluster that mediates the biosynthesis of HIV-1 integrase inhibitor equisetin and of fusarisetin A, both trans-fused decalin-containing tetramic acids showing also antimicrobial activity. The PKS module of fsa1 together with the enoylreductase fsa3 catalyze the formation of the polyketide unit which is then conjugated to L-serine by the condensation domain of the fsa1 NRPS module. Activity of the Dieckmann cyclase domain (RED) results in release of the Dieckmann product intermediate. Diels-Alderase fsa2 is involved in endo-selective Diels-Alder cycloaddition to form the decalin ring, leading to the production of N-desmethylequisetin also called trichosetin. Subsequent N-methylation is carried out by fsa4 to give equisetin. The enzymatic gene responsible for the conversion of equisetin to fusarisetin A has not been identified yet and is probably located outside of the fsa cluster. This is Methyltransferase fsa4 from Fusarium sp. (strain FN080326).